Consider the following 66-residue polypeptide: Large ribosomal subunit protein bL35 (66 aa).

2 stretches are compositionally biased toward basic residues: residues 1–16 (MPKM…RVKR) and 38–49 (TKQKRQLRKARL). Residues 1–49 (MPKMKTHRGAAKRVKRTASGQLKRSRAFTSHLFANKSTKQKRQLRKARL) are disordered.

It belongs to the bacterial ribosomal protein bL35 family.

The protein is Large ribosomal subunit protein bL35 of Staphylococcus aureus (strain MSSA476).